The sequence spans 178 residues: Small ribosomal subunit protein uS5 (178 aa).

The S5 DRBM domain maps to phenylalanine 15–valine 78.

This sequence belongs to the universal ribosomal protein uS5 family. Part of the 30S ribosomal subunit. Contacts proteins S4 and S8.

With S4 and S12 plays an important role in translational accuracy. In terms of biological role, located at the back of the 30S subunit body where it stabilizes the conformation of the head with respect to the body. The chain is Small ribosomal subunit protein uS5 from Thermotoga maritima (strain ATCC 43589 / DSM 3109 / JCM 10099 / NBRC 100826 / MSB8).